The primary structure comprises 78 residues: Small acidic protein 2 (78 aa).

As to expression, expressed in siliques and anthers.

Mediates responses to the synthetic auxin 2,4-dichlorophenoxyacetic acid (2,4-D). Not involved in the response to indole-3-acetic acid (IAA). May interact with RUB modification-related components and may regulate the culling-ring ubiquitin E3 ligase complex (CRL) activity. In Arabidopsis thaliana (Mouse-ear cress), this protein is Small acidic protein 2 (SMAP2).